Reading from the N-terminus, the 93-residue chain is Large ribosomal subunit protein bL31 (93 aa).

A disordered region spans residues 68-93 (GSADAAADEKKTDAKNNNKDNTSKED). A compositionally biased stretch (basic and acidic residues) spans 74–93 (ADEKKTDAKNNNKDNTSKED).

It belongs to the bacterial ribosomal protein bL31 family. Type A subfamily. In terms of assembly, part of the 50S ribosomal subunit.

In terms of biological role, binds the 23S rRNA. This Prochlorococcus marinus (strain MIT 9303) protein is Large ribosomal subunit protein bL31.